A 202-amino-acid chain; its full sequence is ATP-dependent Clp protease proteolytic subunit (202 aa).

Residue serine 106 is the Nucleophile of the active site. The active site involves histidine 131.

Belongs to the peptidase S14 family. As to quaternary structure, fourteen ClpP subunits assemble into 2 heptameric rings which stack back to back to give a disk-like structure with a central cavity, resembling the structure of eukaryotic proteasomes.

It is found in the cytoplasm. The enzyme catalyses Hydrolysis of proteins to small peptides in the presence of ATP and magnesium. alpha-casein is the usual test substrate. In the absence of ATP, only oligopeptides shorter than five residues are hydrolyzed (such as succinyl-Leu-Tyr-|-NHMec, and Leu-Tyr-Leu-|-Tyr-Trp, in which cleavage of the -Tyr-|-Leu- and -Tyr-|-Trp bonds also occurs).. Its function is as follows. Cleaves peptides in various proteins in a process that requires ATP hydrolysis. Has a chymotrypsin-like activity. Plays a major role in the degradation of misfolded proteins. This chain is ATP-dependent Clp protease proteolytic subunit, found in Albidiferax ferrireducens (strain ATCC BAA-621 / DSM 15236 / T118) (Rhodoferax ferrireducens).